The chain runs to 345 residues: Dihydroorotase (345 aa).

Zn(2+) contacts are provided by His-13 and His-15. Substrate contacts are provided by residues 15 to 17 and Asn-41; that span reads HLR. Positions 100, 137, and 175 each coordinate Zn(2+). Position 100 is an N6-carboxylysine (Lys-100). His-137 provides a ligand contact to substrate. Leu-220 lines the substrate pocket. Position 248 (Asp-248) interacts with Zn(2+). Asp-248 is an active-site residue. His-252 and Ala-264 together coordinate substrate.

It belongs to the metallo-dependent hydrolases superfamily. DHOase family. Class II DHOase subfamily. In terms of assembly, homodimer. Zn(2+) is required as a cofactor.

It carries out the reaction (S)-dihydroorotate + H2O = N-carbamoyl-L-aspartate + H(+). It participates in pyrimidine metabolism; UMP biosynthesis via de novo pathway; (S)-dihydroorotate from bicarbonate: step 3/3. Catalyzes the reversible cyclization of carbamoyl aspartate to dihydroorotate. This chain is Dihydroorotase, found in Laribacter hongkongensis (strain HLHK9).